We begin with the raw amino-acid sequence, 101 residues long: Small ribosomal subunit protein uS14 (101 aa).

The protein belongs to the universal ribosomal protein uS14 family. Part of the 30S ribosomal subunit. Contacts proteins S3 and S10.

Functionally, binds 16S rRNA, required for the assembly of 30S particles and may also be responsible for determining the conformation of the 16S rRNA at the A site. The chain is Small ribosomal subunit protein uS14 from Chlamydia caviae (strain ATCC VR-813 / DSM 19441 / 03DC25 / GPIC) (Chlamydophila caviae).